The sequence spans 447 residues: Methylenetetrahydrofolate--tRNA-(uracil-5-)-methyltransferase TrmFO (447 aa).

Position 13-18 (13-18 (GAGLAG)) interacts with FAD.

The protein belongs to the MnmG family. TrmFO subfamily. Requires FAD as cofactor.

Its subcellular location is the cytoplasm. The catalysed reaction is uridine(54) in tRNA + (6R)-5,10-methylene-5,6,7,8-tetrahydrofolate + NADH + H(+) = 5-methyluridine(54) in tRNA + (6S)-5,6,7,8-tetrahydrofolate + NAD(+). It carries out the reaction uridine(54) in tRNA + (6R)-5,10-methylene-5,6,7,8-tetrahydrofolate + NADPH + H(+) = 5-methyluridine(54) in tRNA + (6S)-5,6,7,8-tetrahydrofolate + NADP(+). In terms of biological role, catalyzes the folate-dependent formation of 5-methyl-uridine at position 54 (M-5-U54) in all tRNAs. The sequence is that of Methylenetetrahydrofolate--tRNA-(uracil-5-)-methyltransferase TrmFO from Streptococcus thermophilus (strain ATCC BAA-491 / LMD-9).